A 61-amino-acid polypeptide reads, in one-letter code: Small ribosomal subunit protein uS14 (61 aa).

Residues Cys24, Cys27, Cys40, and Cys43 each contribute to the Zn(2+) site.

This sequence belongs to the universal ribosomal protein uS14 family. Zinc-binding uS14 subfamily. Part of the 30S ribosomal subunit. Contacts proteins S3 and S10. The cofactor is Zn(2+).

Functionally, binds 16S rRNA, required for the assembly of 30S particles and may also be responsible for determining the conformation of the 16S rRNA at the A site. This chain is Small ribosomal subunit protein uS14, found in Mycoplasma mobile (strain ATCC 43663 / 163K / NCTC 11711) (Mesomycoplasma mobile).